The sequence spans 522 residues: Ribonuclease Y (522 aa).

A helical transmembrane segment spans residues 7–27 (STILYCLFFFFLGIAAVLAFI). Residues 212–272 (TTSTVGVPTD…VRREVARMSL (61 aa)) form the KH domain. The HD domain occupies 338–431 (VLRHSVEVAF…VATADACSAS (94 aa)).

This sequence belongs to the RNase Y family.

It is found in the cell membrane. Its function is as follows. Endoribonuclease that initiates mRNA decay. This is Ribonuclease Y from Rhodopirellula baltica (strain DSM 10527 / NCIMB 13988 / SH1).